The primary structure comprises 862 residues: DNA mismatch repair protein MutS (862 aa).

Residue 608–615 (GPNMAGKS) coordinates ATP.

Belongs to the DNA mismatch repair MutS family.

In terms of biological role, this protein is involved in the repair of mismatches in DNA. It is possible that it carries out the mismatch recognition step. This protein has a weak ATPase activity. The protein is DNA mismatch repair protein MutS of Borreliella afzelii (strain PKo) (Borrelia afzelii).